The chain runs to 70 residues: NADH-ubiquinone oxidoreductase chain 3 (70 aa).

Residues 42-62 (FFVITLIFLIFDVEIYLLLPM) traverse the membrane as a helical segment.

It belongs to the complex I subunit 3 family.

The protein resides in the mitochondrion membrane. It carries out the reaction a ubiquinone + NADH + 5 H(+)(in) = a ubiquinol + NAD(+) + 4 H(+)(out). Functionally, core subunit of the mitochondrial membrane respiratory chain NADH dehydrogenase (Complex I) that is believed to belong to the minimal assembly required for catalysis. Complex I functions in the transfer of electrons from NADH to the respiratory chain. The immediate electron acceptor for the enzyme is believed to be ubiquinone. This Artemia salina (Brine shrimp) protein is NADH-ubiquinone oxidoreductase chain 3 (ND3).